We begin with the raw amino-acid sequence, 140 residues long: Ribosome-binding factor A (140 aa).

Residues 121-140 (KTEQTSADDDADRLDSEDRS) form a disordered region.

Belongs to the RbfA family. As to quaternary structure, monomer. Binds 30S ribosomal subunits, but not 50S ribosomal subunits or 70S ribosomes.

It is found in the cytoplasm. Its function is as follows. One of several proteins that assist in the late maturation steps of the functional core of the 30S ribosomal subunit. Associates with free 30S ribosomal subunits (but not with 30S subunits that are part of 70S ribosomes or polysomes). Required for efficient processing of 16S rRNA. May interact with the 5'-terminal helix region of 16S rRNA. The sequence is that of Ribosome-binding factor A from Psychrobacter sp. (strain PRwf-1).